The sequence spans 246 residues: O-antigen export system ATP-binding protein RfbB (246 aa).

An ABC transporter domain is found at 22–246; it reads SGIKDLVFHP…IIELYKQAMA (225 aa). 63 to 70 is a binding site for ATP; that stretch reads GRNGAGKS.

Belongs to the ABC transporter superfamily.

The protein localises to the cell inner membrane. In terms of biological role, may form an ATP-driven O-antigen export apparatus, in association with RfbA. In Klebsiella pneumoniae, this protein is O-antigen export system ATP-binding protein RfbB (rfbB).